A 266-amino-acid chain; its full sequence is Indole-3-glycerol phosphate synthase (266 aa).

Belongs to the TrpC family.

The enzyme catalyses 1-(2-carboxyphenylamino)-1-deoxy-D-ribulose 5-phosphate + H(+) = (1S,2R)-1-C-(indol-3-yl)glycerol 3-phosphate + CO2 + H2O. Its pathway is amino-acid biosynthesis; L-tryptophan biosynthesis; L-tryptophan from chorismate: step 4/5. In Janthinobacterium sp. (strain Marseille) (Minibacterium massiliensis), this protein is Indole-3-glycerol phosphate synthase.